The chain runs to 1187 residues: DNA-directed RNA polymerase subunit beta (1187 aa).

The disordered stretch occupies residues Lys1150 to Gln1187. Positions Ala1173–Gln1187 are enriched in basic and acidic residues.

It belongs to the RNA polymerase beta chain family. As to quaternary structure, the RNAP catalytic core consists of 2 alpha, 1 beta, 1 beta' and 1 omega subunit. When a sigma factor is associated with the core the holoenzyme is formed, which can initiate transcription.

The enzyme catalyses RNA(n) + a ribonucleoside 5'-triphosphate = RNA(n+1) + diphosphate. DNA-dependent RNA polymerase catalyzes the transcription of DNA into RNA using the four ribonucleoside triphosphates as substrates. In Bifidobacterium longum (strain DJO10A), this protein is DNA-directed RNA polymerase subunit beta.